We begin with the raw amino-acid sequence, 126 residues long: Phosphoribosyl-AMP cyclohydrolase (126 aa).

Aspartate 73 serves as a coordination point for Mg(2+). A Zn(2+)-binding site is contributed by cysteine 74. Mg(2+)-binding residues include aspartate 75 and aspartate 77. Zn(2+)-binding residues include cysteine 91 and cysteine 98.

Belongs to the PRA-CH family. Homodimer. Requires Mg(2+) as cofactor. Zn(2+) is required as a cofactor.

It localises to the cytoplasm. It catalyses the reaction 1-(5-phospho-beta-D-ribosyl)-5'-AMP + H2O = 1-(5-phospho-beta-D-ribosyl)-5-[(5-phospho-beta-D-ribosylamino)methylideneamino]imidazole-4-carboxamide. It participates in amino-acid biosynthesis; L-histidine biosynthesis; L-histidine from 5-phospho-alpha-D-ribose 1-diphosphate: step 3/9. In terms of biological role, catalyzes the hydrolysis of the adenine ring of phosphoribosyl-AMP. The protein is Phosphoribosyl-AMP cyclohydrolase of Solibacter usitatus (strain Ellin6076).